Here is a 165-residue protein sequence, read N- to C-terminus: MKSHGIVHKYGDNVDTDVIIPARYLNSSDPKELAKKCMEDIDKEFVNRVNLGDIMVANKNFGCGSSREHAPIAIKASGISCVIAETFARIFYRNAINIGLPIIECKEAARDIDAGNEVEIDFDSGIITNLTKGTSYQGQAFPEFMQKIMKADGLINYINEQLEAV.

The protein belongs to the LeuD family. LeuD type 2 subfamily. Heterodimer of LeuC and LeuD.

The enzyme catalyses (2R,3S)-3-isopropylmalate = (2S)-2-isopropylmalate. The protein operates within amino-acid biosynthesis; L-leucine biosynthesis; L-leucine from 3-methyl-2-oxobutanoate: step 2/4. Its function is as follows. Catalyzes the isomerization between 2-isopropylmalate and 3-isopropylmalate, via the formation of 2-isopropylmaleate. The sequence is that of 3-isopropylmalate dehydratase small subunit from Lachnoclostridium phytofermentans (strain ATCC 700394 / DSM 18823 / ISDg) (Clostridium phytofermentans).